A 195-amino-acid chain; its full sequence is Imidazoleglycerol-phosphate dehydratase (195 aa).

This sequence belongs to the imidazoleglycerol-phosphate dehydratase family.

Its subcellular location is the cytoplasm. The enzyme catalyses D-erythro-1-(imidazol-4-yl)glycerol 3-phosphate = 3-(imidazol-4-yl)-2-oxopropyl phosphate + H2O. The protein operates within amino-acid biosynthesis; L-histidine biosynthesis; L-histidine from 5-phospho-alpha-D-ribose 1-diphosphate: step 6/9. In Campylobacter curvus (strain 525.92), this protein is Imidazoleglycerol-phosphate dehydratase.